A 312-amino-acid chain; its full sequence is MIEFKKPNITVVDQEDSYGKFVVEPLERGFGTTLGNSLRRVLLTSVPGTGLVKVKIDGILHEFTTVPGVKEDVTKIILNLKKLELRAYTEEVKTIELDVEGPATVTAEDLKADADVEVLNPDQYICTIAQGGHLHMWIDVCNGRGYVPASENKTAEMSIGDIPVDSLFSPIEKVNYQVESTRVGKREDFDKLTMEIWTNGSIAPNDALNFAARVLVEHFKAFESADAAAEIGEVMVEQENDQKEKKLEMTIEDLDLSVRSYNCLKRAGINTLQDLTVKSEAEMMRVRNLGRKSLEEVKNKLADLGLSLRQED.

Residues 1 to 226 (MIEFKKPNIT…EHFKAFESAD (226 aa)) form an alpha N-terminal domain (alpha-NTD) region. The alpha C-terminal domain (alpha-CTD) stretch occupies residues 243–312 (KEKKLEMTIE…DLGLSLRQED (70 aa)).

This sequence belongs to the RNA polymerase alpha chain family. Homodimer. The RNAP catalytic core consists of 2 alpha, 1 beta, 1 beta' and 1 omega subunit. When a sigma factor is associated with the core the holoenzyme is formed, which can initiate transcription.

The catalysed reaction is RNA(n) + a ribonucleoside 5'-triphosphate = RNA(n+1) + diphosphate. Its function is as follows. DNA-dependent RNA polymerase catalyzes the transcription of DNA into RNA using the four ribonucleoside triphosphates as substrates. The polypeptide is DNA-directed RNA polymerase subunit alpha (Lactobacillus delbrueckii subsp. bulgaricus (strain ATCC BAA-365 / Lb-18)).